Reading from the N-terminus, the 222-residue chain is Cytidylate kinase (222 aa).

7 to 15 (GPSASGKST) contacts ATP.

The protein belongs to the cytidylate kinase family. Type 1 subfamily.

The protein resides in the cytoplasm. It catalyses the reaction CMP + ATP = CDP + ADP. The catalysed reaction is dCMP + ATP = dCDP + ADP. This chain is Cytidylate kinase, found in Aquifex aeolicus (strain VF5).